Reading from the N-terminus, the 246-residue chain is Sugar fermentation stimulation protein homolog (246 aa).

The protein belongs to the SfsA family.

The polypeptide is Sugar fermentation stimulation protein homolog (Prochlorococcus marinus (strain MIT 9215)).